Here is a 130-residue protein sequence, read N- to C-terminus: Small ribosomal subunit protein uS8 (130 aa).

It belongs to the universal ribosomal protein uS8 family. Part of the 30S ribosomal subunit. Contacts proteins S5 and S12.

Functionally, one of the primary rRNA binding proteins, it binds directly to 16S rRNA central domain where it helps coordinate assembly of the platform of the 30S subunit. The sequence is that of Small ribosomal subunit protein uS8 from Histophilus somni (strain 129Pt) (Haemophilus somnus).